Reading from the N-terminus, the 522-residue chain is Protein nucleotidyltransferase YdiU (522 aa).

Positions 101, 103, 104, 123, 135, 136, 193, and 200 each coordinate ATP. The active-site Proton acceptor is Asp270. Mg(2+) is bound by residues Asn271 and Asp280. Asp280 is an ATP binding site.

This sequence belongs to the SELO family. Mg(2+) serves as cofactor. The cofactor is Mn(2+).

The catalysed reaction is L-seryl-[protein] + ATP = 3-O-(5'-adenylyl)-L-seryl-[protein] + diphosphate. It catalyses the reaction L-threonyl-[protein] + ATP = 3-O-(5'-adenylyl)-L-threonyl-[protein] + diphosphate. The enzyme catalyses L-tyrosyl-[protein] + ATP = O-(5'-adenylyl)-L-tyrosyl-[protein] + diphosphate. It carries out the reaction L-histidyl-[protein] + UTP = N(tele)-(5'-uridylyl)-L-histidyl-[protein] + diphosphate. The catalysed reaction is L-seryl-[protein] + UTP = O-(5'-uridylyl)-L-seryl-[protein] + diphosphate. It catalyses the reaction L-tyrosyl-[protein] + UTP = O-(5'-uridylyl)-L-tyrosyl-[protein] + diphosphate. Functionally, nucleotidyltransferase involved in the post-translational modification of proteins. It can catalyze the addition of adenosine monophosphate (AMP) or uridine monophosphate (UMP) to a protein, resulting in modifications known as AMPylation and UMPylation. The chain is Protein nucleotidyltransferase YdiU from Flavobacterium johnsoniae (strain ATCC 17061 / DSM 2064 / JCM 8514 / BCRC 14874 / CCUG 350202 / NBRC 14942 / NCIMB 11054 / UW101) (Cytophaga johnsonae).